A 1904-amino-acid chain; its full sequence is Voltage-dependent calcium channel type A subunit alpha-1 (1904 aa).

Positions 1–45 (MLGGVGGRHMSTRRRGSSPLVRGGAGLTGYAGPGASGNSNDVAAI) are disordered. The segment covering 23-35 (GGAGLTGYAGPGA) has biased composition (gly residues). Over 30–168 (YAGPGASGNS…KHTRFIIEWP (139 aa)) the chain is Cytoplasmic. An I repeat occupies 155-447 (NCIRKHTRFI…LVLGVLSGEF (293 aa)). The helical transmembrane segment at 169–187 (PFEYAVLLTIIANCVVLAL) threads the bilayer. Residues 188–205 (EEHLPKQDKTILAQKLEA) are Extracellular-facing. The helical transmembrane segment at 206-225 (TEIYFLGIFCVEASLKILAL) threads the bilayer. Residues 226–237 (GFVLHRGSYLRN) are Cytoplasmic-facing. The chain crosses the membrane as a helical span at residues 238-259 (IWNIMDFFVVVTGFITAFSQGI). Topologically, residues 260–264 (ELDMD) are extracellular. The helical transmembrane segment at 265-283 (LRTLRAIRVLRPLKLVSGI) threads the bilayer. Over 284–302 (PSLQVVLKSIIKAMAPLLQ) the chain is Cytoplasmic. Residues 303–322 (IGLLVLFAIVIFAIIGLEFY) form a helical membrane-spanning segment. Residues 323–419 (SGTLHKTCYS…WTNDALGSTY (97 aa)) are Extracellular-facing. N-linked (GlcNAc...) asparagine glycans are attached at residues asparagine 353 and asparagine 367. The helical transmembrane segment at 420 to 444 (NWIYFIPLIVLGSFFMLNLVLGVLS) threads the bilayer. Residues 445 to 568 (GEFAKEREKV…YWIRKSVKSQ (124 aa)) lie on the Cytoplasmic side of the membrane. The disordered stretch occupies residues 513-543 (KKLGKSKSTDTEEEEGDDDQDDGELSSSTKE). Over residues 523-536 (TEEEEGDDDQDDGE) the composition is skewed to acidic residues. Residues 554–797 (EKRFRYWIRK…VFLAIAVDNL (244 aa)) form an II repeat. A helical transmembrane segment spans residues 569-587 (KFYWFVIVLVFFNTVCVAV). Topologically, residues 588-602 (EHYGQPQWLTDFLYF) are extracellular. A helical transmembrane segment spans residues 603–622 (AEFVFLALFMLEMFIKVYAL). Topologically, residues 623–630 (GPRTYFDS) are cytoplasmic. A helical transmembrane segment spans residues 631–649 (SFNRFDCVVISGSIFEVIW). Over 650–658 (SEVKSGSFG) the chain is Extracellular. Residues 659–677 (LSVLRALRLLRIFKVTKYW) traverse the membrane as a helical segment. The Cytoplasmic segment spans residues 678 to 696 (KSLRNLVISLLSSMRSIIS). A helical transmembrane segment spans residues 697–716 (LLFLLFLFILIFALLGMQLF). At 717-769 (GGQFNFDSGTPPTNFNTFPIALLTVFQILTGEDWNEVMYQGIESQGGHKKGMI) the chain is on the extracellular side. A helical transmembrane segment spans residues 770–794 (YSLYFIVLVLFGNYTLLNVFLAIAV). Topologically, residues 795–895 (DNLANAQELS…VRRAAHWVVN (101 aa)) are cytoplasmic. The segment at 827–869 (QSLQNPKDGGAPKVEICPPNGKGGKQSSEEEKKQDEDDDTGPK) is disordered. The III repeat unit spans residues 890–1177 (AHWVVNLRYF…IITFQEQGEA (288 aa)). The chain crosses the membrane as a helical span at residues 896–914 (LRYFDFFIMVVISLSSIAL). At 915–930 (AAEDPVWEDSPRNEVL) the chain is on the extracellular side. A helical transmembrane segment spans residues 931 to 950 (NYFDYAFTGVFTVEMILKII). The Cytoplasmic portion of the chain corresponds to 951–962 (DLGIILHPGSYL). Residues 963-981 (REFWNIMDAVVVICAAVSF) form a helical membrane-spanning segment. Residues 982-994 (AFDMTGSSAGQNL) lie on the Extracellular side of the membrane. An N-linked (GlcNAc...) asparagine glycan is attached at asparagine 993. The helical transmembrane segment at 995 to 1013 (STIKSLRVLRVLRPLKTIK) threads the bilayer. At 1014-1032 (RVPKLKAVFDCVVNSLKNV) the chain is on the cytoplasmic side. A helical membrane pass occupies residues 1033–1052 (INILIVYILFQFIFAVIAVQ). Over 1053-1141 (LFNGKFFYCS…EDKGPIQNFR (89 aa)) the chain is Extracellular. The chain crosses the membrane as a helical span at residues 1142 to 1166 (IEMSIFYIVYFIVFPFFFVNIFVAL). The Cytoplasmic portion of the chain corresponds to 1167-1221 (IIITFQEQGEAELQDGEIDKNQKSCIDFTIQARPLERYMPKERNSVKYKIWRIVV). The IV repeat unit spans residues 1214–1470 (YKIWRIVVST…DNFDYLTRDS (257 aa)). Residues 1222–1250 (STPFEYFIMGLIVLNTVLLMMKFHRQSDA) form a helical membrane-spanning segment. At 1251 to 1255 (YKNTL) the chain is on the extracellular side. Residues 1256 to 1275 (KYMNMCFTGMFTVECILKIA) form a helical membrane-spanning segment. Topologically, residues 1276–1283 (AFGVRNFF) are cytoplasmic. A helical transmembrane segment spans residues 1284–1302 (KDAWNTFDFITVIGSIVDA). The Extracellular segment spans residues 1303–1309 (LVIEFGE). The helical transmembrane segment at 1310-1328 (NFINVGFLRLFRAARLIKL) threads the bilayer. The Cytoplasmic segment spans residues 1329–1347 (LRQGYTIRILLWTFVQSFK). A helical membrane pass occupies residues 1348-1367 (ALPYVCLLIAMLFFIYAIIG). Residues 1368-1431 (MQVFGNIALD…AKAGKQEGGC (64 aa)) lie on the Extracellular side of the membrane. The segment at 1430 to 1471 (GCGSNIAYAYFVSFIFFCSFLMLNLFVAVIMDNFDYLTRDSS) is phenylalkylamine binding. Residues 1432-1456 (GSNIAYAYFVSFIFFCSFLMLNLFV) traverse the membrane as a helical segment. Residues 1457–1904 (AVIMDNFDYL…HSDSDEDDWC (448 aa)) are Cytoplasmic-facing. Positions 1476–1511 (HHLDEFVRIWAEYDPNATGKIHYTEMYDMLKNMDPP) constitute an EF-hand domain. Aspartate 1489, asparagine 1491, threonine 1493, lysine 1495, and glutamate 1500 together coordinate Ca(2+). 3 disordered regions span residues 1652 to 1694 (THTG…HEGP), 1710 to 1788 (THHP…HSYP), and 1870 to 1904 (GGRL…DDWC). Low complexity predominate over residues 1670–1681 (RSPSLRHSPGRP). A compositionally biased stretch (basic and acidic residues) spans 1682–1691 (GYDHHGHYYH). Residues 1710 to 1725 (THHPHPSQYNHRHRMR) show a composition bias toward basic residues. A compositionally biased stretch (low complexity) spans 1727-1740 (PWSASTSPARTPSP). Residues 1751–1762 (GTTSLEQRSRSP) are compositionally biased toward polar residues. Residues 1771 to 1784 (PHTHQHYHRHHPHQ) are compositionally biased toward basic residues.

It belongs to the calcium channel alpha-1 subunit (TC 1.A.1.11) family. CACNA1I subfamily. In terms of assembly, interacts with CATSPER1 and CATSPER2, leading to suppress T-type calcium channel activity.

It is found in the membrane. Functionally, voltage-sensitive calcium channels (VSCC) mediate the entry of calcium ions into excitable cells and are also involved in a variety of calcium-dependent processes, including muscle contraction, neurotransmitter release, gene expression, cell motility, cell division and cell death. The protein is Voltage-dependent calcium channel type A subunit alpha-1 (CAC) of Apis mellifera (Honeybee).